Here is a 474-residue protein sequence, read N- to C-terminus: Trigger factor (474 aa).

The PPIase FKBP-type domain occupies 171 to 258; the sequence is GDVAVIDFQG…LKELKTRDLP (88 aa). The tract at residues 441-474 is disordered; the sequence is TEVDAASATVETTATETAEEAPEAPKAKKGKKKA. The segment covering 444–456 has biased composition (low complexity); it reads DAASATVETTATE.

Belongs to the FKBP-type PPIase family. Tig subfamily.

Its subcellular location is the cytoplasm. It carries out the reaction [protein]-peptidylproline (omega=180) = [protein]-peptidylproline (omega=0). In terms of biological role, involved in protein export. Acts as a chaperone by maintaining the newly synthesized protein in an open conformation. Functions as a peptidyl-prolyl cis-trans isomerase. In Synechococcus elongatus (strain ATCC 33912 / PCC 7942 / FACHB-805) (Anacystis nidulans R2), this protein is Trigger factor.